Here is a 239-residue protein sequence, read N- to C-terminus: tRNA (guanine-N(7)-)-methyltransferase (239 aa).

Residues Glu-69, Glu-94, Asp-121, and Asp-144 each coordinate S-adenosyl-L-methionine. Asp-144 is an active-site residue. Lys-148 contributes to the substrate binding site. The interaction with RNA stretch occupies residues 150–155; the sequence is RHNKRR. Residues Asp-180 and 217 to 220 contribute to the substrate site; that span reads TKFE.

This sequence belongs to the class I-like SAM-binding methyltransferase superfamily. TrmB family. As to quaternary structure, monomer.

It carries out the reaction guanosine(46) in tRNA + S-adenosyl-L-methionine = N(7)-methylguanosine(46) in tRNA + S-adenosyl-L-homocysteine. The protein operates within tRNA modification; N(7)-methylguanine-tRNA biosynthesis. Its function is as follows. Catalyzes the formation of N(7)-methylguanine at position 46 (m7G46) in tRNA. The protein is tRNA (guanine-N(7)-)-methyltransferase of Yersinia pseudotuberculosis serotype I (strain IP32953).